The primary structure comprises 386 residues: WD repeat-containing protein 89 (386 aa).

WD repeat units lie at residues lysine 21–glutamate 65, glycine 68–valine 107, glycine 112–serine 156, threonine 167–alanine 207, asparagine 213–proline 253, and glycine 318–threonine 357.

In Mus musculus (Mouse), this protein is WD repeat-containing protein 89 (Wdr89).